The following is a 465-amino-acid chain: UDP-N-acetylmuramate--L-alanine ligase (465 aa).

118 to 124 (GTHGKTT) lines the ATP pocket.

This sequence belongs to the MurCDEF family.

The protein resides in the cytoplasm. It carries out the reaction UDP-N-acetyl-alpha-D-muramate + L-alanine + ATP = UDP-N-acetyl-alpha-D-muramoyl-L-alanine + ADP + phosphate + H(+). The protein operates within cell wall biogenesis; peptidoglycan biosynthesis. Its function is as follows. Cell wall formation. The protein is UDP-N-acetylmuramate--L-alanine ligase of Ruegeria pomeroyi (strain ATCC 700808 / DSM 15171 / DSS-3) (Silicibacter pomeroyi).